Reading from the N-terminus, the 65-residue chain is Large ribosomal subunit protein bL35 (65 aa).

This sequence belongs to the bacterial ribosomal protein bL35 family.

The polypeptide is Large ribosomal subunit protein bL35 (Nitrosomonas europaea (strain ATCC 19718 / CIP 103999 / KCTC 2705 / NBRC 14298)).